An 801-amino-acid chain; its full sequence is Phenylalanine--tRNA ligase beta subunit (801 aa).

The region spanning 39 to 153 is the tRNA-binding domain; it reads AEGLSKLVVG…EGAIPGDSIF (115 aa). The 76-residue stretch at 406–481 folds into the B5 domain; it reads TEPVEVSTTL…RIYGYEKLPT (76 aa). Residues aspartate 459, aspartate 465, glutamate 468, and glutamate 469 each contribute to the Mg(2+) site. In terms of domain architecture, FDX-ACB spans 708 to 801; the sequence is TKYPSVSRDI…LVEKVNAEIR (94 aa).

This sequence belongs to the phenylalanyl-tRNA synthetase beta subunit family. Type 1 subfamily. Tetramer of two alpha and two beta subunits. The cofactor is Mg(2+).

Its subcellular location is the cytoplasm. The enzyme catalyses tRNA(Phe) + L-phenylalanine + ATP = L-phenylalanyl-tRNA(Phe) + AMP + diphosphate + H(+). The polypeptide is Phenylalanine--tRNA ligase beta subunit (Streptococcus agalactiae serotype V (strain ATCC BAA-611 / 2603 V/R)).